Reading from the N-terminus, the 72-residue chain is MTKKAKNVEKISFEDAMKRLEEIIDLMNQPTTSLEASLALYEEADQLMRICESRIQEVEARIKQLSDQRSES.

This sequence belongs to the XseB family. As to quaternary structure, heterooligomer composed of large and small subunits.

The protein resides in the cytoplasm. The catalysed reaction is Exonucleolytic cleavage in either 5'- to 3'- or 3'- to 5'-direction to yield nucleoside 5'-phosphates.. In terms of biological role, bidirectionally degrades single-stranded DNA into large acid-insoluble oligonucleotides, which are then degraded further into small acid-soluble oligonucleotides. The chain is Exodeoxyribonuclease 7 small subunit from Chlamydia trachomatis serovar D (strain ATCC VR-885 / DSM 19411 / UW-3/Cx).